The chain runs to 179 residues: Nucleoside diphosphate kinase 6 (179 aa).

The ATP site is built by K18, F67, R95, T101, R115, and N125. The Pros-phosphohistidine intermediate role is filled by H128.

It belongs to the NDK family. It depends on Mg(2+) as a cofactor.

The enzyme catalyses a 2'-deoxyribonucleoside 5'-diphosphate + ATP = a 2'-deoxyribonucleoside 5'-triphosphate + ADP. The catalysed reaction is a ribonucleoside 5'-diphosphate + ATP = a ribonucleoside 5'-triphosphate + ADP. In terms of biological role, major role in the synthesis of nucleoside triphosphates other than ATP. The ATP gamma phosphate is transferred to the NDP beta phosphate via a ping-pong mechanism, using a phosphorylated active-site intermediate. The chain is Nucleoside diphosphate kinase 6 (nme6) from Xenopus tropicalis (Western clawed frog).